The following is a 169-amino-acid chain: MRKLKYHEKKLLTKHDFLNYKKDDNNHRDVNVIRRYHIPQREDYFKYNQLVGLLLGIANKLSLLEPTDSFGNLHKKMLLGKLFDMALLTSTPKLSDVENKLTVSAFCRRRLPVVMCRLKMCETVSTSVKYVEHGHVRVGPEVITDPAFFVTRNMEDFVTWVDSSKIRRN.

The region spanning 109–166 (RRLPVVMCRLKMCETVSTSVKYVEHGHVRVGPEVITDPAFFVTRNMEDFVTWVDSSKI) is the S4 RNA-binding domain.

Belongs to the universal ribosomal protein uS4 family. Component of a heterotrimeric complex containing imp3, imp4 and mpp10.

It is found in the nucleus. It localises to the nucleolus. In terms of biological role, component of the U3 small nucleolar ribonucleoprotein. Required for the early cleavages at sites A0, A1 and A2 during 18S ribosomal pre-RNA processing. The protein is U3 small nucleolar ribonucleoprotein protein imp3 (RBP) of Pneumocystis carinii.